The following is a 587-amino-acid chain: MKRSMYAGRVREEHIGQEITLKGWVGRRRDLGGLIFIDLRDREGIMQLVINPEKVSAEVMATAESLRSEFVIEVTGQVAAREQANDKLPTGAVELNVTALIVLNTAKTTPFEIKDGIEANDDTRLRYRYLDLRRPEMLENLKLRAKVTHSIRNYLDELEFIDVETPFLSKSTPEGARDYLVPSRVNKGHFYALPQSPQITKQLLMNAGFDRYYQIVKCFRDEDLRGDRQPEFTQVDLETSFLTEQEIQDITEGLIARVMKETKDIEVTLPFPRMKYDDAMALYGSDKPDTRFDMLLQDLTEVVKGVDFKVFSEALAVKAIVVKGAADNYSRKDIDKMTEVAKQYGAKGLAWVKVVDGELNGPVAKFLTGIQEELTTALALEDKDLVLFVADTLEVANATLGALRGRIAKELGLIDNDKFNFLWVVDWPMFEWSEEEGRYMSAHHPFTLPQEETAHELEGDLAKVRAIAYDIVLNGYELGGGSLRINQKDLQERMFKALGFSAEEANDQFGFLLEAMDYGFPPHGGLAIGLDRFVMLLAGEENIREVIAFPKNNKATDPMTQAPSTVALKQLEELSLQVEEDETSKTN.

Residue Glu-174 coordinates L-aspartate. The segment at 198–201 (QITK) is aspartate. Arg-220 is a binding site for L-aspartate. ATP contacts are provided by residues 220–222 (RDE) and Gln-229. His-443 lines the L-aspartate pocket. Residue Glu-477 participates in ATP binding. L-aspartate is bound at residue Arg-484. ATP is bound at residue 529–532 (GLDR).

It belongs to the class-II aminoacyl-tRNA synthetase family. Type 1 subfamily. As to quaternary structure, homodimer.

It localises to the cytoplasm. It carries out the reaction tRNA(Asp) + L-aspartate + ATP = L-aspartyl-tRNA(Asp) + AMP + diphosphate. In terms of biological role, catalyzes the attachment of L-aspartate to tRNA(Asp) in a two-step reaction: L-aspartate is first activated by ATP to form Asp-AMP and then transferred to the acceptor end of tRNA(Asp). In Streptococcus pneumoniae serotype 2 (strain D39 / NCTC 7466), this protein is Aspartate--tRNA ligase.